A 433-amino-acid chain; its full sequence is UDP-N-acetylglucosamine 1-carboxyvinyltransferase (433 aa).

Lys34 to Asn35 lines the phosphoenolpyruvate pocket. Arg104 contributes to the UDP-N-acetyl-alpha-D-glucosamine binding site. The active-site Proton donor is the Cys128. Cys128 carries the 2-(S-cysteinyl)pyruvic acid O-phosphothioketal modification. Residues Asp320 and Ile342 each coordinate UDP-N-acetyl-alpha-D-glucosamine.

This sequence belongs to the EPSP synthase family. MurA subfamily.

It is found in the cytoplasm. It carries out the reaction phosphoenolpyruvate + UDP-N-acetyl-alpha-D-glucosamine = UDP-N-acetyl-3-O-(1-carboxyvinyl)-alpha-D-glucosamine + phosphate. The protein operates within cell wall biogenesis; peptidoglycan biosynthesis. In terms of biological role, cell wall formation. Adds enolpyruvyl to UDP-N-acetylglucosamine. This is UDP-N-acetylglucosamine 1-carboxyvinyltransferase from Synechococcus sp. (strain CC9605).